The following is a 152-amino-acid chain: Large ribosomal subunit protein bL9 (152 aa).

This sequence belongs to the bacterial ribosomal protein bL9 family.

Binds to the 23S rRNA. The chain is Large ribosomal subunit protein bL9 from Saccharophagus degradans (strain 2-40 / ATCC 43961 / DSM 17024).